The following is a 117-amino-acid chain: Large ribosomal subunit protein bL20 (117 aa).

The protein belongs to the bacterial ribosomal protein bL20 family.

In terms of biological role, binds directly to 23S ribosomal RNA and is necessary for the in vitro assembly process of the 50S ribosomal subunit. It is not involved in the protein synthesizing functions of that subunit. In Helicobacter hepaticus (strain ATCC 51449 / 3B1), this protein is Large ribosomal subunit protein bL20.